Consider the following 242-residue polypeptide: Carboxy-S-adenosyl-L-methionine synthase (242 aa).

S-adenosyl-L-methionine contacts are provided by residues tyrosine 39, glycine 64–serine 66, aspartate 89–asparagine 90, aspartate 117–isoleucine 118, asparagine 132, and arginine 199.

Belongs to the class I-like SAM-binding methyltransferase superfamily. Cx-SAM synthase family. As to quaternary structure, homodimer.

It catalyses the reaction prephenate + S-adenosyl-L-methionine = carboxy-S-adenosyl-L-methionine + 3-phenylpyruvate + H2O. Its function is as follows. Catalyzes the conversion of S-adenosyl-L-methionine (SAM) to carboxy-S-adenosyl-L-methionine (Cx-SAM). The protein is Carboxy-S-adenosyl-L-methionine synthase of Psychromonas ingrahamii (strain DSM 17664 / CCUG 51855 / 37).